Consider the following 119-residue polypeptide: Large ribosomal subunit protein uL22c (119 aa).

The protein belongs to the universal ribosomal protein uL22 family. In terms of assembly, part of the 50S ribosomal subunit.

It is found in the plastid. It localises to the chloroplast. In terms of biological role, this protein binds specifically to 23S rRNA. Its function is as follows. The globular domain of the protein is located near the polypeptide exit tunnel on the outside of the subunit, while an extended beta-hairpin is found that lines the wall of the exit tunnel in the center of the 70S ribosome. This Anthoceros angustus (Hornwort) protein is Large ribosomal subunit protein uL22c (rpl22).